Consider the following 576-residue polypeptide: Sulfite reductase [NADPH] hemoprotein beta-component (576 aa).

The span at 1 to 12 shows a compositional bias: basic and acidic residues; that stretch reads MNVKTEPDRSRD. A disordered region spans residues 1–25; that stretch reads MNVKTEPDRSRDVSQPLDKLGPDET. [4Fe-4S] cluster-binding residues include C441, C447, C486, and C490. Position 490 (C490) interacts with siroheme.

This sequence belongs to the nitrite and sulfite reductase 4Fe-4S domain family. As to quaternary structure, alpha(8)-beta(8). The alpha component is a flavoprotein, the beta component is a hemoprotein. The cofactor is siroheme. [4Fe-4S] cluster serves as cofactor.

It carries out the reaction hydrogen sulfide + 3 NADP(+) + 3 H2O = sulfite + 3 NADPH + 4 H(+). It functions in the pathway sulfur metabolism; hydrogen sulfide biosynthesis; hydrogen sulfide from sulfite (NADPH route): step 1/1. In terms of biological role, component of the sulfite reductase complex that catalyzes the 6-electron reduction of sulfite to sulfide. This is one of several activities required for the biosynthesis of L-cysteine from sulfate. This Nitrobacter hamburgensis (strain DSM 10229 / NCIMB 13809 / X14) protein is Sulfite reductase [NADPH] hemoprotein beta-component.